The sequence spans 98 residues: UPF0235 protein Mmc1_3654 (98 aa).

The protein belongs to the UPF0235 family.

The sequence is that of UPF0235 protein Mmc1_3654 from Magnetococcus marinus (strain ATCC BAA-1437 / JCM 17883 / MC-1).